A 210-amino-acid polypeptide reads, in one-letter code: Ribonuclease HII (210 aa).

The RNase H type-2 domain maps to 2-203 (SGVMGIDEAG…YKRVESEVKQ (202 aa)). Aspartate 8, glutamate 9, and aspartate 99 together coordinate a divalent metal cation.

The protein belongs to the RNase HII family. It depends on Mn(2+) as a cofactor. Mg(2+) is required as a cofactor.

It localises to the cytoplasm. It catalyses the reaction Endonucleolytic cleavage to 5'-phosphomonoester.. Its function is as follows. Endonuclease that specifically degrades the RNA of RNA-DNA hybrids. The protein is Ribonuclease HII of Methanopyrus kandleri (strain AV19 / DSM 6324 / JCM 9639 / NBRC 100938).